We begin with the raw amino-acid sequence, 489 residues long: Membrane-bound lytic murein transglycosylase F (489 aa).

The N-terminal stretch at 1–32 (MFALTAYRLRCAAWLLATGIFLLLAGCSEAKA) is a signal peptide. Residues 33–268 (PTALERVQKE…RLKDRYYGHV (236 aa)) form a non-LT domain region. The tract at residues 269 to 489 (DVLGYVGAYT…PEEDSGDEKL (221 aa)) is LT domain. Glu-315 is a catalytic residue. The segment at 466–489 (AESGLHLPGVNKTRPEEDSGDEKL) is disordered. Residues 478–489 (TRPEEDSGDEKL) are compositionally biased toward basic and acidic residues.

This sequence in the N-terminal section; belongs to the bacterial solute-binding protein 3 family. The protein in the C-terminal section; belongs to the transglycosylase Slt family.

Its subcellular location is the cell outer membrane. It carries out the reaction Exolytic cleavage of the (1-&gt;4)-beta-glycosidic linkage between N-acetylmuramic acid (MurNAc) and N-acetylglucosamine (GlcNAc) residues in peptidoglycan, from either the reducing or the non-reducing ends of the peptidoglycan chains, with concomitant formation of a 1,6-anhydrobond in the MurNAc residue.. Its function is as follows. Murein-degrading enzyme that degrades murein glycan strands and insoluble, high-molecular weight murein sacculi, with the concomitant formation of a 1,6-anhydromuramoyl product. Lytic transglycosylases (LTs) play an integral role in the metabolism of the peptidoglycan (PG) sacculus. Their lytic action creates space within the PG sacculus to allow for its expansion as well as for the insertion of various structures such as secretion systems and flagella. This is Membrane-bound lytic murein transglycosylase F from Pseudomonas aeruginosa (strain UCBPP-PA14).